A 649-amino-acid chain; its full sequence is DNA ligase (649 aa).

NAD(+) contacts are provided by residues 62 to 66 and 104 to 105; these read DSTYD and ST. Lysine 142 serves as the catalytic N6-AMP-lysine intermediate. The NAD(+) site is built by arginine 158, glutamate 189, and lysine 301. Cysteine 389, cysteine 392, cysteine 405, and cysteine 411 together coordinate Zn(2+). In terms of domain architecture, BRCT spans 569–649; that stretch reads PGETPVFGKI…LDYLALISTY (81 aa).

It belongs to the NAD-dependent DNA ligase family. LigA subfamily. Mg(2+) is required as a cofactor. Requires Mn(2+) as cofactor.

The enzyme catalyses NAD(+) + (deoxyribonucleotide)n-3'-hydroxyl + 5'-phospho-(deoxyribonucleotide)m = (deoxyribonucleotide)n+m + AMP + beta-nicotinamide D-nucleotide.. In terms of biological role, DNA ligase that catalyzes the formation of phosphodiester linkages between 5'-phosphoryl and 3'-hydroxyl groups in double-stranded DNA using NAD as a coenzyme and as the energy source for the reaction. It is essential for DNA replication and repair of damaged DNA. In Psychromonas ingrahamii (strain DSM 17664 / CCUG 51855 / 37), this protein is DNA ligase.